Here is a 297-residue protein sequence, read N- to C-terminus: Protein LRATD1 (297 aa).

A Phosphoserine modification is found at Ser38. Residues 138–233 enclose the LRAT domain; it reads PAPEPPAPAP…CRFGKREFKA (96 aa).

It belongs to the LRATD family.

The protein resides in the cytoplasm. In terms of biological role, may play a role in cell morphology and motility. The chain is Protein LRATD1 (LRATD1) from Bos taurus (Bovine).